The chain runs to 210 residues: Large ribosomal subunit protein uL4 (210 aa).

The span at 41 to 51 (ANARQGTQSTK) shows a compositional bias: polar residues. Disordered regions lie at residues 41–60 (ANARQGTQSTKTRGEVQGSS) and 67–98 (KGTGNARMGTNRSPVRRHGGVAFGPRPRDFSK).

This sequence belongs to the universal ribosomal protein uL4 family. Part of the 50S ribosomal subunit.

Its function is as follows. One of the primary rRNA binding proteins, this protein initially binds near the 5'-end of the 23S rRNA. It is important during the early stages of 50S assembly. It makes multiple contacts with different domains of the 23S rRNA in the assembled 50S subunit and ribosome. Functionally, forms part of the polypeptide exit tunnel. This Dehalococcoides mccartyi (strain ATCC BAA-2100 / JCM 16839 / KCTC 5957 / BAV1) protein is Large ribosomal subunit protein uL4.